The sequence spans 2442 residues: Piezo-type mechanosensitive ion channel component 1 (2442 aa).

Topologically, residues 1-5 (MTVPP) are extracellular. A helical transmembrane segment spans residues 6–26 (LLKSCVVKLLLPAALLAAAII). Position 27 (Arg27) is a topological domain, cytoplasmic. The helical transmembrane segment at 28–48 (PSFLSIGYVLLALVSAVLPPI) threads the bilayer. Topologically, residues 49 to 56 (RKSLALPK) are extracellular. The helical transmembrane segment at 57–77 (LVGTFVIITFLFCLAVALGVG) threads the bilayer. Residues 78 to 122 (SYQISEQVVHKNDRTYICNRSDTTLFRSIGLVRFHPTGTFESTRA) lie on the Cytoplasmic side of the membrane. Residues 123–143 (FLPEIIATSAALLTIIIVMFL) form a helical membrane-spanning segment. The Extracellular portion of the chain corresponds to 144–173 (SHRDEQLDVVGDVVTVRSESGREQRRQRKL). Residues 174 to 196 (AAIMWSAIGNSLRRLTNFVLFLF) form a helical membrane-spanning segment. Over 197 to 198 (TA) the chain is Cytoplasmic. The helical transmembrane segment at 199–219 (YVGIVKPSLSNSIYFLAFLFI) threads the bilayer. Over 220-239 (STWWSTYTPLRHGVYNQIKK) the chain is Extracellular. A helical transmembrane segment spans residues 240-260 (FLIFYSALHFLVLYTYQIPIV). Residues 261–303 (HHSWLPTGSFLPRLFGLTVLMDSSCPEWWKFPFVAPDFNDDDL) are Cytoplasmic-facing. A helical membrane pass occupies residues 304-324 (IMKWPLYANPIVVLVFFYLTV). Topologically, residues 325–454 (AQYKFTRNGS…GDKESAASKG (130 aa)) are extracellular. 3 N-linked (GlcNAc...) asparagine glycosylation sites follow: Asn332, Asn392, and Asn440. Residues 389 to 417 (LLSNASSSANDDEQGRARSRSPLRNGEEQ) form a disordered region. A helical membrane pass occupies residues 455–475 (MIAVMTFVIFHSYSIALTAMM). At 476 to 478 (TWA) the chain is on the cytoplasmic side. A helical membrane pass occupies residues 479 to 499 (LLYHSIFGLILLILTCILWIF). Residues 500–506 (RDTRKSS) are Extracellular-facing. A helical transmembrane segment spans residues 507–527 (FAMAPIILMYIEFLLILQYFL). Topologically, residues 528 to 552 (SMDIHAEIGDPAWMNFVGIEWTTLP) are cytoplasmic. The helical transmembrane segment at 553–573 (VHAVIILCVQTLLTLPVFLLL) threads the bilayer. Residues 574–633 (RLARREKFYESLSDYERQRRINSYGTFGASKTGAGGVAVAKFQDPKSRKFAAFVEYLSNK) lie on the Extracellular side of the membrane. Residues 634 to 654 (VSVYFIFVVSVVLLVVSTCFA) traverse the membrane as a helical segment. Residues 655-656 (PN) lie on the Cytoplasmic side of the membrane. A helical membrane pass occupies residues 657–677 (FYNILFFALWALNLIYLKFSF). Topologically, residues 678 to 683 (RLYRGL) are extracellular. The chain crosses the membrane as a helical span at residues 684-704 (AYAFWLTLTFYTSIVIIALYI). The Cytoplasmic portion of the chain corresponds to 705–739 (YQFPGVSQWIIRNTSLSQEWLNAIGLVDFRAIGES). The chain crosses the membrane as a helical span at residues 740–760 (GALFLQLLAPIALFVVTMLQL). Topologically, residues 761 to 832 (KFFHGPWSRA…WRFFEVHISK (72 aa)) are extracellular. Positions 768-798 (SRATSPRRAENDPPTSTTEAAAVASTSGTQG) are disordered. Low complexity predominate over residues 782–794 (TSTTEAAAVASTS). The N-linked (GlcNAc...) asparagine glycan is linked to Asn816. The helical transmembrane segment at 833 to 853 (IVFVIIAIFIANNINALYIPL) threads the bilayer. Residues 854 to 874 (VILLSLAICLPSAADGIFSLF) are Cytoplasmic-facing. A helical transmembrane segment spans residues 875-895 (MCAYLFLVALSKMIYQLDIVP). Topologically, residues 896–931 (ELSQIDRGVGADNCSHGNISMPEWFGLKKEVEGTEP) are extracellular. Residues Asn908 and Asn913 are each glycosylated (N-linked (GlcNAc...) asparagine). Residues 932–952 (IYMLFGVIVSIIALAFQSIVI) traverse the membrane as a helical segment. Residues 953 to 990 (YRQRHYRASLGLPESMRAKVFPDFHHSHFDRSLKNAIQ) lie on the Cytoplasmic side of the membrane. The chain crosses the membrane as a helical span at residues 991 to 1011 (FLIDYGFYKFGLEITMIAIGI). Position 1012 (Asp1012) is a topological domain, extracellular. The helical transmembrane segment at 1013 to 1033 (IFNRMDALAAIQCFWLVLFAL) threads the bilayer. At 1034–1041 (NKRVFVRR) the chain is on the cytoplasmic side. The helical transmembrane segment at 1042-1062 (IWVFYVIYMAILYPLQFFSYV) threads the bilayer. Over 1063–1096 (GLPPDSCIEYPWSYWIPSYSDDARFNLSYLLNLS) the chain is Extracellular. Residues Asn1088 and Asn1094 are each glycosylated (N-linked (GlcNAc...) asparagine). The chain crosses the membrane as a helical span at residues 1097-1117 (IYGVNWPSAYLIGDFFVLLLA). Residues 1118–1160 (SCQLAVFRREGEDNDSIYNDGNFVIKPENPQYDFIDTKKSYVD) are Cytoplasmic-facing. The helical transmembrane segment at 1161–1181 (YFKSFVFHYGHWITLMSTLAA) threads the bilayer. Residues 1182 to 1187 (GIAGTS) are Extracellular-facing. The helical transmembrane segment at 1188–1210 (LFALGYIIFTLTMLWSGNNLYVM) threads the bilayer. At 1211–1231 (NSTLRSFEHTLKRWNALLGYT) the chain is on the cytoplasmic side. A helical transmembrane segment spans residues 1232–1252 (LFTITMKVCLQIFGCVFLSWF). Residues 1253-1299 (DQSGGWGKTLCIVRQLFSITCVNNECHVLKELEDFSKACAVETKEGN) lie on the Extracellular side of the membrane. A helical transmembrane segment spans residues 1300–1320 (IGFDVIALSFLVFQIRIFHSW). The Cytoplasmic portion of the chain corresponds to 1321–1615 (YFQHCMVEYR…VVNCIGAHTD (295 aa)). Positions 1463 to 1502 (DTIKDPDSRALIAVSEPEARKPGGTEETDGDEDEDNKDSK) are disordered. Residues 1488-1498 (EETDGDEDEDN) show a composition bias toward acidic residues. Residues 1616-1636 (ILCYFFAIMTQVMTGGLITLP) form a helical membrane-spanning segment. Residues 1637-1654 (LPLMSLFWGNLSNPRPSK) are Extracellular-facing. Asn1646 carries N-linked (GlcNAc...) asparagine glycosylation. A helical transmembrane segment spans residues 1655–1675 (FFWVTMITYTECVIVIKFVCQ). Residues 1676-1706 (FAFMPYNSITWRTEHQMDPMSLDKLFGVSQR) lie on the Cytoplasmic side of the membrane. The helical transmembrane segment at 1707-1727 (DSFALWDIVLLFSLFFHRYML) threads the bilayer. Residues 1728 to 1833 (RKLGLWKDAN…KFRYIRDLYP (106 aa)) are Extracellular-facing. Asn1737 carries N-linked (GlcNAc...) asparagine glycosylation. Residues 1834–1854 (IMFGIDVICFLIMTFGYSAFG) traverse the membrane as a helical segment. At 1855–1866 (EGGSGNVLDDVK) the chain is on the cytoplasmic side. A helical transmembrane segment spans residues 1867 to 1887 (ASRIPVTLVVMLVGMTLAIII). The Extracellular segment spans residues 1888-1900 (DRALYLRKSVVGK). A helical membrane pass occupies residues 1901–1921 (LIYQVLMIAFLHIWVFLVLPN). Over 1922 to 1930 (MTRRSAISN) the chain is Cytoplasmic. A helical membrane pass occupies residues 1931–1951 (HVAQALYVIKSCYFLVSAWQI). Over 1952–2046 (RNGYPELCIG…KGKLVKYMMG (95 aa)) the chain is Extracellular. A helical transmembrane segment spans residues 2047–2067 (FPIIIGVVIFIFSPLLLWSLL). The Cytoplasmic segment spans residues 2068–2346 (NQIGTISMPE…VGFIDRAFPS (279 aa)). The helical transmembrane segment at 2347 to 2367 (FLAKVFKGGVIAVYLSVILVV) threads the bilayer. Residues 2368–2442 (GRGLVRGIFT…WTRMSKKKQE (75 aa)) lie on the Extracellular side of the membrane.

This sequence belongs to the PIEZO (TC 1.A.75) family. As to expression, expressed in the pharyngeal-intestinal and spermathecal-uterine valves and in multiple reproductive tissues including the germline, somatic oviduct, and spermatheca. During reproduction, it is expressed in sheath cells, sperm, both spermathecal valves and the spermathecal bag cells.

It is found in the cell membrane. Pore-forming subunit of a mechanosensitive non-specific cation channel. Generates currents characterized by a linear current-voltage relationship. Plays a role in reproduction by positively regulating inter-tissue signaling to promote oocyte maturation, ovulation and fertilization, and sperm navigation from and to the spermatheca. May play a role in regulating cytosolic and endoplasmic reticulum calcium ion release. The protein is Piezo-type mechanosensitive ion channel component 1 of Caenorhabditis elegans.